The primary structure comprises 491 residues: Angiopoietin-related protein 1 (491 aa).

Positions 1 to 23 (MKTFTWTLGVLFFLLVDTGHCRG) are cleaved as a signal peptide. Positions 80–168 (ITRMDLENLK…LNVTTEMLKM (89 aa)) form a coiled coil. Asn-160 and Asn-188 each carry an N-linked (GlcNAc...) asparagine glycan. Residues 271-491 (FINEGPFKDC…AVQMMIKPID (221 aa)) form the Fibrinogen C-terminal domain. 2 cysteine pairs are disulfide-bonded: Cys-280–Cys-309 and Cys-432–Cys-445.

Highly expressed in adrenal gland, placenta, thyroid gland, heart, skeletal muscle and small intestine. Weakly expressed in testis, ovary, colon, pancreas, kidney and stomach.

Its subcellular location is the secreted. The sequence is that of Angiopoietin-related protein 1 (ANGPTL1) from Homo sapiens (Human).